The chain runs to 83 residues: Cytochrome b559 subunit alpha (83 aa).

The helical transmembrane segment at 21-35 (VIHSITVPSLFIAGW) threads the bilayer. Histidine 23 contacts heme.

It belongs to the PsbE/PsbF family. In terms of assembly, heterodimer of an alpha subunit and a beta subunit. PSII is composed of 1 copy each of membrane proteins PsbA, PsbB, PsbC, PsbD, PsbE, PsbF, PsbH, PsbI, PsbJ, PsbK, PsbL, PsbM, PsbT, PsbX, PsbY, PsbZ, Psb30/Ycf12, at least 3 peripheral proteins of the oxygen-evolving complex and a large number of cofactors. It forms dimeric complexes. The cofactor is heme b.

The protein localises to the plastid. It is found in the chloroplast thylakoid membrane. Functionally, this b-type cytochrome is tightly associated with the reaction center of photosystem II (PSII). PSII is a light-driven water:plastoquinone oxidoreductase that uses light energy to abstract electrons from H(2)O, generating O(2) and a proton gradient subsequently used for ATP formation. It consists of a core antenna complex that captures photons, and an electron transfer chain that converts photonic excitation into a charge separation. This chain is Cytochrome b559 subunit alpha, found in Oltmannsiellopsis viridis (Marine flagellate).